The sequence spans 557 residues: UvrABC system protein C (557 aa).

In terms of domain architecture, GIY-YIG spans 14-89; the sequence is EEPGVYIFKN…IKKYRPKYNV (76 aa). The region spanning 194–229 is the UVR domain; it reads EEVFDYLKEKMETHSKMLDFENAAKYRDLLLNLSNV.

The protein belongs to the UvrC family. As to quaternary structure, interacts with UvrB in an incision complex.

It localises to the cytoplasm. In terms of biological role, the UvrABC repair system catalyzes the recognition and processing of DNA lesions. UvrC both incises the 5' and 3' sides of the lesion. The N-terminal half is responsible for the 3' incision and the C-terminal half is responsible for the 5' incision. In Thermotoga maritima (strain ATCC 43589 / DSM 3109 / JCM 10099 / NBRC 100826 / MSB8), this protein is UvrABC system protein C.